Here is a 793-residue protein sequence, read N- to C-terminus: DNA mismatch repair protein MutS (793 aa).

589-596 contributes to the ATP binding site; the sequence is GPNMSGKS.

This sequence belongs to the DNA mismatch repair MutS family.

Its function is as follows. This protein is involved in the repair of mismatches in DNA. It is possible that it carries out the mismatch recognition step. This protein has a weak ATPase activity. This chain is DNA mismatch repair protein MutS, found in Thermotoga petrophila (strain ATCC BAA-488 / DSM 13995 / JCM 10881 / RKU-1).